Reading from the N-terminus, the 176-residue chain is ATP synthase subunit b (176 aa).

The helical transmembrane segment at 18 to 38 (FGLDATVWVSIAMLVFLGILV) threads the bilayer.

The protein belongs to the ATPase B chain family. In terms of assembly, F-type ATPases have 2 components, F(1) - the catalytic core - and F(0) - the membrane proton channel. F(1) has five subunits: alpha(3), beta(3), gamma(1), delta(1), epsilon(1). F(0) has three main subunits: a(1), b(2) and c(10-14). The alpha and beta chains form an alternating ring which encloses part of the gamma chain. F(1) is attached to F(0) by a central stalk formed by the gamma and epsilon chains, while a peripheral stalk is formed by the delta and b chains.

It localises to the cell inner membrane. Functionally, f(1)F(0) ATP synthase produces ATP from ADP in the presence of a proton or sodium gradient. F-type ATPases consist of two structural domains, F(1) containing the extramembraneous catalytic core and F(0) containing the membrane proton channel, linked together by a central stalk and a peripheral stalk. During catalysis, ATP synthesis in the catalytic domain of F(1) is coupled via a rotary mechanism of the central stalk subunits to proton translocation. Component of the F(0) channel, it forms part of the peripheral stalk, linking F(1) to F(0). The polypeptide is ATP synthase subunit b (Sphingopyxis alaskensis (strain DSM 13593 / LMG 18877 / RB2256) (Sphingomonas alaskensis)).